Consider the following 221-residue polypeptide: GFP-like non-fluorescent chromoprotein (221 aa).

Residues 62–64 (QYG) constitute a cross-link (2-iminomethyl-5-imidazolinone (Gln-Gly)). A (E)-2,3-didehydrotyrosine modification is found at Tyr63.

The protein belongs to the GFP family. As to quaternary structure, homotetramer. In terms of processing, contains a chromophore consisting of modified amino acid residues. The chromophore is formed by autocatalytic backbone condensation between Xaa-N and Gly-(N+2), oxidation of Tyr-(N+1) to didehydrotyrosine, and formation of a double bond to the alpha-amino nitrogen of residue Xaa-N. Maturation of the chromophore requires nothing other than molecular oxygen.

Its function is as follows. Thought to play a role in photoprotection of the coral's resident symbiont microalgae's photosystems from photoinhibition caused by high light levels found near the surface of coral reefs. The chain is GFP-like non-fluorescent chromoprotein from Montipora efflorescens (Pore coral).